The following is a 201-amino-acid chain: ADP-ribosylation factor-related protein 1 (201 aa).

Met1 is modified (N-acetylmethionine). GTP contacts are provided by residues 24–31, 75–79, and 134–137; these read GLDNAGKT, DLGGQ, and NKQD.

It belongs to the small GTPase superfamily. Arf family. Interacts with SYS1.

The protein resides in the golgi apparatus. It is found in the trans-Golgi network. Functionally, trans-Golgi-associated GTPase that regulates protein sorting. Controls the targeting of ARL1 and its effector to the trans-Golgi. Required for the lipidation of chylomicrons in the intestine and required for VLDL lipidation in the liver. This is ADP-ribosylation factor-related protein 1 (ARFRP1) from Bos taurus (Bovine).